A 169-amino-acid chain; its full sequence is Der GTPase-activating protein YihI (169 aa).

Disordered stretches follow at residues 1–92 (MKPS…EKPM) and 146–169 (SYDDDEEEEEDEKQEDMMRLLRGN). Basic residues predominate over residues 10–19 (SKGHAKARRK). Residues 20–30 (TREELDQEARD) are compositionally biased toward basic and acidic residues. The segment covering 31 to 40 (RKRQKKRRGH) has biased composition (basic residues). Residues 49–58 (GNTTSGSKGQ) show a composition bias toward polar residues. A compositionally biased stretch (acidic residues) spans 147-159 (YDDDEEEEEDEKQ). Over residues 160 to 169 (EDMMRLLRGN) the composition is skewed to basic and acidic residues.

Belongs to the YihI family. As to quaternary structure, interacts with Der.

A GTPase-activating protein (GAP) that modifies Der/EngA GTPase function. May play a role in ribosome biogenesis. The chain is Der GTPase-activating protein YihI from Escherichia coli O1:K1 / APEC.